The chain runs to 148 residues: Ribonuclease H (148 aa).

Residues 1–142 (MSDSVEIYTD…ADQLANRGVD (142 aa)) enclose the RNase H type-1 domain. Aspartate 10, glutamate 48, aspartate 70, and aspartate 134 together coordinate Mg(2+). Positions 129 to 148 (GNERADQLANRGVDEVRAQR) are disordered.

This sequence belongs to the RNase H family. As to quaternary structure, monomer. Mg(2+) serves as cofactor.

It localises to the cytoplasm. It carries out the reaction Endonucleolytic cleavage to 5'-phosphomonoester.. Functionally, endonuclease that specifically degrades the RNA of RNA-DNA hybrids. This is Ribonuclease H from Pseudomonas entomophila (strain L48).